The following is a 693-amino-acid chain: Elongation factor G (693 aa).

The 276-residue stretch at Asn8–Thr283 folds into the tr-type G domain. Residues Ala17–Thr24, Asp81–His85, and Asn135–Asp138 contribute to the GTP site.

It belongs to the TRAFAC class translation factor GTPase superfamily. Classic translation factor GTPase family. EF-G/EF-2 subfamily.

The protein resides in the cytoplasm. In terms of biological role, catalyzes the GTP-dependent ribosomal translocation step during translation elongation. During this step, the ribosome changes from the pre-translocational (PRE) to the post-translocational (POST) state as the newly formed A-site-bound peptidyl-tRNA and P-site-bound deacylated tRNA move to the P and E sites, respectively. Catalyzes the coordinated movement of the two tRNA molecules, the mRNA and conformational changes in the ribosome. The chain is Elongation factor G from Wolinella succinogenes (strain ATCC 29543 / DSM 1740 / CCUG 13145 / JCM 31913 / LMG 7466 / NCTC 11488 / FDC 602W) (Vibrio succinogenes).